The sequence spans 147 residues: 3-hydroxyacyl-[acyl-carrier-protein] dehydratase FabZ (147 aa).

His-49 is an active-site residue.

It belongs to the thioester dehydratase family. FabZ subfamily.

It localises to the cytoplasm. The catalysed reaction is a (3R)-hydroxyacyl-[ACP] = a (2E)-enoyl-[ACP] + H2O. Its function is as follows. Involved in unsaturated fatty acids biosynthesis. Catalyzes the dehydration of short chain beta-hydroxyacyl-ACPs and long chain saturated and unsaturated beta-hydroxyacyl-ACPs. The protein is 3-hydroxyacyl-[acyl-carrier-protein] dehydratase FabZ of Alkaliphilus metalliredigens (strain QYMF).